A 215-amino-acid polypeptide reads, in one-letter code: UPF0319 protein VVA1446 (215 aa).

Positions 1–21 are cleaved as a signal peptide; the sequence is MNIIKPLTCILAMSISGLATA.

This sequence belongs to the UPF0319 family.

The sequence is that of UPF0319 protein VVA1446 from Vibrio vulnificus (strain YJ016).